The following is a 394-amino-acid chain: Phloroisovalerophenone synthase (394 aa).

Residue cysteine 166 is part of the active site.

The protein belongs to the thiolase-like superfamily. Chalcone/stilbene synthases family. Homodimer. As to expression, expressed in lupulin gland. Present at low levels in leaves but accumulates in cones.

The enzyme catalyses 3-methylbutanoyl-CoA + 3 malonyl-CoA + 3 H(+) = phlorisovalerophenone + 3 CO2 + 4 CoA. The catalysed reaction is (E)-4-coumaroyl-CoA + 3 malonyl-CoA + 3 H(+) = 2',4,4',6'-tetrahydroxychalcone + 3 CO2 + 4 CoA. It catalyses the reaction 2-methylpropanoyl-CoA + 3 malonyl-CoA + 3 H(+) = phlorisobutanophenone + 3 CO2 + 4 CoA. The protein operates within secondary metabolite biosynthesis. Involved in the biosynthesis of prenylated phenolics natural products which contribute to the bitter taste of beer and display broad biological activities. Polyketide synthase that can use 3-methylbutanoyl-CoA (isovaleryl-CoA) and 2-methylpropanoyl-CoA (isobutyryl-CoA) as substrates to produce phlorisovalerophenone (PIVP) and phlorisobutyrophenone (2-methyl-1-(2,4,6-trihydroxyphenyl)propan-1-one), respectively, intermediates in the biosynthesis of the bitter acids (alpha and beta) acids. Can also produce naringenin-chalcone (2',4,4',6'-tetrahydroxychalcone) from 4-coumaroyl-CoA with a lower efficiency. The polypeptide is Phloroisovalerophenone synthase (Humulus lupulus (European hop)).